A 498-amino-acid polypeptide reads, in one-letter code: ATP synthase subunit beta, chloroplastic (498 aa).

Residues 1–14 (MRTNPTTSRPGVST) are compositionally biased toward polar residues. The disordered stretch occupies residues 1 to 20 (MRTNPTTSRPGVSTSEEKST). 172 to 179 (GGAGVGKT) is a binding site for ATP.

The protein belongs to the ATPase alpha/beta chains family. F-type ATPases have 2 components, CF(1) - the catalytic core - and CF(0) - the membrane proton channel. CF(1) has five subunits: alpha(3), beta(3), gamma(1), delta(1), epsilon(1). CF(0) has four main subunits: a(1), b(1), b'(1) and c(9-12).

The protein resides in the plastid. The protein localises to the chloroplast thylakoid membrane. The enzyme catalyses ATP + H2O + 4 H(+)(in) = ADP + phosphate + 5 H(+)(out). Its function is as follows. Produces ATP from ADP in the presence of a proton gradient across the membrane. The catalytic sites are hosted primarily by the beta subunits. The polypeptide is ATP synthase subunit beta, chloroplastic (Hordeum vulgare (Barley)).